The primary structure comprises 53 residues: Large ribosomal subunit protein bL33 (53 aa).

The protein belongs to the bacterial ribosomal protein bL33 family.

This chain is Large ribosomal subunit protein bL33, found in Malacoplasma penetrans (strain HF-2) (Mycoplasma penetrans).